The primary structure comprises 479 residues: Baeyer-Villiger monooxygenase AacuH (479 aa).

The segment at D14–R34 is disordered.

This sequence belongs to the AflY oxidoreductase family.

It functions in the pathway secondary metabolite biosynthesis. Functionally, baeyer-Villiger monooxygenase; part of the gene cluster that mediates the biosynthesis of the tetrahydroxanthone dimer secalonic acid D. The pathway begins with the synthesis of atrochrysone thioester by the polyketide synthase AacuL. The atrochrysone carboxyl ACP thioesterase AacuM then breaks the thioester bond and releases the atrochrysone carboxylic acid from AacuL. Atrochrysone carboxylic acid is decarboxylated by the decarboxylase AacuI, and oxidized by the anthrone oxygenase AacuG to yield emodin. Emodin is then reduced to emodin hydroquinone by a yet unidentified oxidoreductase. A-ring reduction by the short chain dehydrogenase AacuN, dehydration by the scytalone dehydratase-like protein AacuK and probable spontaneous re-oxidation, results in overall deoxygenation to chrysophanol. Baeyer-Villiger oxidation by the Baeyer-Villiger monooxygenase (BVMO) AacuH then yields monodictyphenone. Monodictyphenone is transformed into compounds with the tetrahydroxanthone skeleton via methylesterification by the methyltransferase AacuQ, followed by the action of the flavin-dependent monooxygenase AacuC, the isomerase AacuP, and the short chain dehydrogenase/reductase AacuF or AacuD. AacuF and AacuD should accept the same compound as a substrate but perform the ketoreduction with a different stereoselectivity, thus yielding blennolides B and A, respectively. In the final step of the biosynthesis, the cytochrome P450 monooxygenase AacuE accepts blennolide B and/or blennolide A to conduct the dimerization reaction to furnish the tetrahydroxanthone dimers, secalonic acids D, B, and F. The chain is Baeyer-Villiger monooxygenase AacuH from Aspergillus aculeatus (strain ATCC 16872 / CBS 172.66 / WB 5094).